Here is a 660-residue protein sequence, read N- to C-terminus: DNA mismatch repair protein MutL (660 aa).

Disordered stretches follow at residues 368-426 and 439-461; these read PQQT…PTKK and NREQ…STQQ. Residues 406–417 are compositionally biased toward low complexity; it reads SSSSNSTAPSRS.

Belongs to the DNA mismatch repair MutL/HexB family.

Functionally, this protein is involved in the repair of mismatches in DNA. It is required for dam-dependent methyl-directed DNA mismatch repair. May act as a 'molecular matchmaker', a protein that promotes the formation of a stable complex between two or more DNA-binding proteins in an ATP-dependent manner without itself being part of a final effector complex. This Aliivibrio fischeri (strain ATCC 700601 / ES114) (Vibrio fischeri) protein is DNA mismatch repair protein MutL.